The following is a 269-amino-acid chain: MTEGKSSDKPAKRLLALNPKEDAEFQKKVQQVKKRPQTGQTLSPGVLYVGHLPRGLFEPQLKSYFEQFGKVLRLRVSRSKKTGGSKGYGFVEFECDEVAKIVAETMNNYLMGERIIKCHVIPPEKVHEKLFVGSIAGFKKPKYPAVTRYNKTHTEDDVKKVGTKLLSKESKLRKRLAAKGIDYDFPGFAAQIPAKKAPSEANVSVCSEDVTPVCTPSLLERRKSLRVEDDDVDDEIVIKVKPLPENSDDVEESEEESAEEDEGEEEEAA.

In terms of domain architecture, RRM spans 45–123 (GVLYVGHLPR…RIIKCHVIPP (79 aa)). Residues 234–269 (DEIVIKVKPLPENSDDVEESEEESAEEDEGEEEEAA) are disordered. A compositionally biased stretch (acidic residues) spans 246 to 269 (NSDDVEESEEESAEEDEGEEEEAA).

The protein localises to the nucleus. Its subcellular location is the nucleolus. Its function is as follows. Plays an essential role in early embryonic development. The sequence is that of MKI67 FHA domain-interacting nucleolar phosphoprotein (nifk) from Danio rerio (Zebrafish).